The following is a 161-amino-acid chain: MAVEALHCGLNPRGIDHSAHADGIKLQIEGEGVESQSIKNRTFQKVPDQKGTPKRLQGEAETAKSATVKLSKPVALWTQQDVCKWLKKHCPNQYQLYSESFKQHDITGRALLRLTDKKLERMGIAQENQRQHILQQVLQLKVREEVRNLQLLTQASVECSP.

The interval 44–64 (QKVPDQKGTPKRLQGEAETAK) is disordered. Positions 77 to 143 (WTQQDVCKWL…LQQVLQLKVR (67 aa)) constitute an SAM domain.

The sequence is that of Sterile alpha motif domain-containing protein 12 (Samd12) from Mus musculus (Mouse).